The primary structure comprises 346 residues: Proto-oncogene serine/threonine-protein kinase mos (346 aa).

One can recognise a Protein kinase domain in the interval 60-341 (VCLLQRLGAG…RPLLVDLTSL (282 aa)). ATP-binding positions include 66 to 74 (LGAGGFGSV) and Lys-87. Asp-201 functions as the Proton acceptor in the catalytic mechanism.

The protein belongs to the protein kinase superfamily. Ser/Thr protein kinase family.

It carries out the reaction L-seryl-[protein] + ATP = O-phospho-L-seryl-[protein] + ADP + H(+). It catalyses the reaction L-threonyl-[protein] + ATP = O-phospho-L-threonyl-[protein] + ADP + H(+). This is Proto-oncogene serine/threonine-protein kinase mos from Chlorocebus aethiops (Green monkey).